Consider the following 403-residue polypeptide: Tryptophan synthase beta chain 1 (403 aa).

Lys-96 is modified (N6-(pyridoxal phosphate)lysine).

This sequence belongs to the TrpB family. In terms of assembly, tetramer of two alpha and two beta chains. It depends on pyridoxal 5'-phosphate as a cofactor.

It carries out the reaction (1S,2R)-1-C-(indol-3-yl)glycerol 3-phosphate + L-serine = D-glyceraldehyde 3-phosphate + L-tryptophan + H2O. The protein operates within amino-acid biosynthesis; L-tryptophan biosynthesis; L-tryptophan from chorismate: step 5/5. In terms of biological role, the beta subunit is responsible for the synthesis of L-tryptophan from indole and L-serine. In Wolinella succinogenes (strain ATCC 29543 / DSM 1740 / CCUG 13145 / JCM 31913 / LMG 7466 / NCTC 11488 / FDC 602W) (Vibrio succinogenes), this protein is Tryptophan synthase beta chain 1 (trpB1).